The chain runs to 82 residues: Small ribosomal subunit protein uS17 (82 aa).

Belongs to the universal ribosomal protein uS17 family. As to quaternary structure, part of the 30S ribosomal subunit.

Functionally, one of the primary rRNA binding proteins, it binds specifically to the 5'-end of 16S ribosomal RNA. This chain is Small ribosomal subunit protein uS17, found in Tolumonas auensis (strain DSM 9187 / NBRC 110442 / TA 4).